Here is a 266-residue protein sequence, read N- to C-terminus: Cytochrome c oxidase subunit 2 (266 aa).

The Mitochondrial intermembrane segment spans residues 1–43 (MTITNYINNQFTFLDMAEPWQLGFQDPATPVMEGIINFHHDLM). Residues 44 to 64 (FFLISIVVFVCWMLFRVITLF) traverse the membrane as a helical segment. At 65–82 (DEKKNKIPATVVHGATIE) the chain is on the mitochondrial matrix side. A helical membrane pass occupies residues 83 to 103 (IIWTSIPALILLTVAVPSFAL). Topologically, residues 104–266 (LYSMDEVIDP…NVXLIKFYGI (163 aa)) are mitochondrial intermembrane. The Cu cation site is built by histidine 186, cysteine 221, glutamate 223, cysteine 225, histidine 229, and methionine 232. Glutamate 223 serves as a coordination point for Mg(2+).

It belongs to the cytochrome c oxidase subunit 2 family. As to quaternary structure, component of the cytochrome c oxidase (complex IV, CIV), a multisubunit enzyme composed of a catalytic core of 3 subunits and several supernumerary subunits. The complex exists as a monomer or a dimer and forms supercomplexes (SCs) in the inner mitochondrial membrane with ubiquinol-cytochrome c oxidoreductase (cytochrome b-c1 complex, complex III, CIII). The cofactor is Cu cation.

The protein localises to the mitochondrion inner membrane. The enzyme catalyses 4 Fe(II)-[cytochrome c] + O2 + 8 H(+)(in) = 4 Fe(III)-[cytochrome c] + 2 H2O + 4 H(+)(out). Functionally, component of the cytochrome c oxidase, the last enzyme in the mitochondrial electron transport chain which drives oxidative phosphorylation. The respiratory chain contains 3 multisubunit complexes succinate dehydrogenase (complex II, CII), ubiquinol-cytochrome c oxidoreductase (cytochrome b-c1 complex, complex III, CIII) and cytochrome c oxidase (complex IV, CIV), that cooperate to transfer electrons derived from NADH and succinate to molecular oxygen, creating an electrochemical gradient over the inner membrane that drives transmembrane transport and the ATP synthase. Cytochrome c oxidase is the component of the respiratory chain that catalyzes the reduction of oxygen to water. Electrons originating from reduced cytochrome c in the intermembrane space (IMS) are transferred via the dinuclear copper A center (CU(A)) of subunit 2 and heme A of subunit 1 to the active site in subunit 1, a binuclear center (BNC) formed by heme A3 and copper B (CU(B)). The BNC reduces molecular oxygen to 2 water molecules using 4 electrons from cytochrome c in the IMS and 4 protons from the mitochondrial matrix. This is Cytochrome c oxidase subunit 2 (COX2) from Phytophthora megasperma (Potato pink rot fungus).